We begin with the raw amino-acid sequence, 535 residues long: Cytochrome P450 monooxygenase claP (535 aa).

The next 2 helical transmembrane spans lie at 7–27 (IGTL…KLVG) and 225–245 (YFSM…KLPT). Position 472 (cysteine 472) interacts with heme.

The protein belongs to the cytochrome P450 family. Heme is required as a cofactor.

It is found in the membrane. The protein operates within secondary metabolite biosynthesis; terpenoid biosynthesis. Functionally, cytochrome P450 monooxygenase; part of the gene cluster that mediates the biosynthesis of clavilactone A, a meroterpenoid that features a unique benzo-fused ten-membered carbocyclic ring unit with an alpha,beta-epoxy-gamma-lactone moiety, forming an intriguing 10/5/3 tricyclic nested skeleton. Cytochrome P450 monooxygenases claO, claP, claQ, claU, and claW are close orthologs, suggesting that a redundant function or pseudogenes are present in the cla cluster. These monoxygenases are not involved in clavilactone A biosynthesis nor its modification. ClaR, ClaS and ClaT are sufficient to produce clavilactone A. The biosynthesis begins with the prenyltransferase claS that transfers geranyl pyrophosphate (GPP) to hydroquinone to produces geranylhydroquinone. The cytochrome P450 monooxygenase claR then catalyzes the diradical coupling reaction between the intramolecular hydroquinone and allyl moieties to form the benzo-fused ten-membered carbocyclic ring unit of wigantol. Finally the cytochrome P450 monooxygenase claT exquisitely and stereoselectively assembles the alpha,beta-epoxy-gamma-lactone moiety, producing clavilactone A via arnebinol A. The polypeptide is Cytochrome P450 monooxygenase claP (Ampulloclitocybe clavipes (Club foot)).